The following is a 269-amino-acid chain: NAD-capped RNA hydrolase NudC (269 aa).

Residue Arg81 participates in substrate binding. Zn(2+) contacts are provided by Cys110, Cys113, Cys128, and Cys131. Substrate is bound at residue Tyr136. The Nudix hydrolase domain maps to 137–260 (PRIFPCIIVA…TIARALIEQT (124 aa)). 3 residues coordinate a divalent metal cation: Ala170, Glu186, and Glu190. Residues 171 to 192 (GFVEVGETLEQCVAREVLEETG) carry the Nudix box motif. 204–211 (QPWAFPSS) is a binding site for substrate. An a divalent metal cation-binding site is contributed by Glu231. Ala253 contacts substrate.

It belongs to the Nudix hydrolase family. NudC subfamily. As to quaternary structure, homodimer. The cofactor is Mg(2+). Mn(2+) is required as a cofactor. Requires Zn(2+) as cofactor.

The enzyme catalyses a 5'-end NAD(+)-phospho-ribonucleoside in mRNA + H2O = a 5'-end phospho-adenosine-phospho-ribonucleoside in mRNA + beta-nicotinamide D-ribonucleotide + 2 H(+). It carries out the reaction NAD(+) + H2O = beta-nicotinamide D-ribonucleotide + AMP + 2 H(+). It catalyses the reaction NADH + H2O = reduced beta-nicotinamide D-ribonucleotide + AMP + 2 H(+). Its function is as follows. mRNA decapping enzyme that specifically removes the nicotinamide adenine dinucleotide (NAD) cap from a subset of mRNAs by hydrolyzing the diphosphate linkage to produce nicotinamide mononucleotide (NMN) and 5' monophosphate mRNA. The NAD-cap is present at the 5'-end of some mRNAs and stabilizes RNA against 5'-processing. Has preference for mRNAs with a 5'-end purine. Catalyzes the hydrolysis of a broad range of dinucleotide pyrophosphates. This is NAD-capped RNA hydrolase NudC from Vibrio cholerae serotype O1 (strain ATCC 39315 / El Tor Inaba N16961).